The following is a 155-amino-acid chain: Large ribosomal subunit protein uL16 (155 aa).

A disordered region spans residues 1–22; it reads MLSPKRTKYRKQQRGRMKGKAT.

Belongs to the universal ribosomal protein uL16 family. Part of the 50S ribosomal subunit.

Functionally, binds 23S rRNA and is also seen to make contacts with the A and possibly P site tRNAs. The sequence is that of Large ribosomal subunit protein uL16 from Synechococcus sp. (strain JA-2-3B'a(2-13)) (Cyanobacteria bacterium Yellowstone B-Prime).